A 179-amino-acid chain; its full sequence is Peptidyl-prolyl cis-trans isomerase A (179 aa).

The 164-residue stretch at 15–178 folds into the PPIase cyclophilin-type domain; it reads FFDITIGGVE…KPVVIANCGQ (164 aa).

The protein belongs to the cyclophilin-type PPIase family.

The protein resides in the cytoplasm. It is found in the cytosol. It catalyses the reaction [protein]-peptidylproline (omega=180) = [protein]-peptidylproline (omega=0). Its activity is regulated as follows. Binds cyclosporin A (CsA). CsA mediates some of its effects via an inhibitory action on PPIase. In terms of biological role, PPIase that catalyzes the cis-trans isomerization of proline imidic peptide bonds in oligopeptides and may therefore assist protein folding. The sequence is that of Peptidyl-prolyl cis-trans isomerase A (ppiA) from Dictyostelium discoideum (Social amoeba).